Consider the following 290-residue polypeptide: Ribosomal RNA small subunit methyltransferase A (290 aa).

6 residues coordinate S-adenosyl-L-methionine: N27, L29, G54, E75, D100, and N125.

It belongs to the class I-like SAM-binding methyltransferase superfamily. rRNA adenine N(6)-methyltransferase family. RsmA subfamily.

Its subcellular location is the cytoplasm. It carries out the reaction adenosine(1518)/adenosine(1519) in 16S rRNA + 4 S-adenosyl-L-methionine = N(6)-dimethyladenosine(1518)/N(6)-dimethyladenosine(1519) in 16S rRNA + 4 S-adenosyl-L-homocysteine + 4 H(+). Functionally, specifically dimethylates two adjacent adenosines (A1518 and A1519) in the loop of a conserved hairpin near the 3'-end of 16S rRNA in the 30S particle. May play a critical role in biogenesis of 30S subunits. This chain is Ribosomal RNA small subunit methyltransferase A, found in Streptococcus pneumoniae (strain P1031).